A 106-amino-acid polypeptide reads, in one-letter code: Large ribosomal subunit protein uL24 (106 aa).

Belongs to the universal ribosomal protein uL24 family. Part of the 50S ribosomal subunit.

Functionally, one of two assembly initiator proteins, it binds directly to the 5'-end of the 23S rRNA, where it nucleates assembly of the 50S subunit. Its function is as follows. One of the proteins that surrounds the polypeptide exit tunnel on the outside of the subunit. In Parabacteroides distasonis (strain ATCC 8503 / DSM 20701 / CIP 104284 / JCM 5825 / NCTC 11152), this protein is Large ribosomal subunit protein uL24.